The following is a 308-amino-acid chain: Cell division protein FtsQ (308 aa).

The segment at 1-28 is disordered; that stretch reads MQSLSFPPNRRTPRLAPPRRETGRRDPA. Over 1–46 the chain is Cytoplasmic; it reads MQSLSFPPNRRTPRLAPPRRETGRRDPAPSRWAYRAQRLWLTPMFR. The span at 18–28 shows a compositional bias: basic and acidic residues; it reads PRRETGRRDPA. A helical membrane pass occupies residues 47–67; it reads TALRVGLPIVGVLLVVALIFA. Residues 68–308 lie on the Periplasmic side of the membrane; sequence SADRRAAMAG…RGIDTSGSDL (241 aa). The 69-residue stretch at 92-160 folds into the POTRA domain; it reads FMVTLLSVDG…GLLEVRVTER (69 aa).

Belongs to the FtsQ/DivIB family. FtsQ subfamily.

It localises to the cell inner membrane. Its function is as follows. Essential cell division protein. In Cereibacter sphaeroides (strain ATCC 17023 / DSM 158 / JCM 6121 / CCUG 31486 / LMG 2827 / NBRC 12203 / NCIMB 8253 / ATH 2.4.1.) (Rhodobacter sphaeroides), this protein is Cell division protein FtsQ.